The primary structure comprises 88 residues: MADSDPGERSYDNMLKMLSDLNKDLEKLLEEMEKISVQATWMAYDMVVMRTNPTLAESMRRLEDAFLNCKEEMEKNWQELLTETKRKQ.

Residues 8–75 are a coiled coil; it reads ERSYDNMLKM…FLNCKEEMEK (68 aa).

As to quaternary structure, homodimer. Can form higher-order homooligomers. Interacts with SYCP1 (via tetrameric core); the interaction remodels SYCP1 homotetramers to 2:1 heterotrimers with SYCE3. SYCP1/SYCE3 heterotrimers form lattice assemblies as part of the mature synaptonemal complex via both lateral and head-to-head interactions. Interacts with the SYCE1-SIX6OS1 complex; the interaction recruits the SYCE1-SIX6OS1 complex to the central element of the synaptonemal complex. Interacts with the SYCE2-TEX12 complex; the interaction promotes fibrous assembly of SYCE2-TEX12 as part of the synaptonemal complex central element. Interacts with SYCE1. Interacts with SYCE2. Interacts with proteasome subunit PSMA8; to participate in meiosis progression during spermatogenesis. Interacts with SPO16. In terms of tissue distribution, expression is restricted to spermatocytes and is absent in spermatogonia, spermatids and spermatogonia (at protein level). Expressed in adult testis and embryonic ovary. Expressed in the convoluted seminiferous tubules in spermatogonia and spermatocytes.

It localises to the nucleus. The protein localises to the chromosome. Functionally, major component of the transverse central element of synaptonemal complexes (SCS), formed between homologous chromosomes during meiotic prophase. Required for the assembly of the central element of the synaptonemal complex during meiosis, via remodeling of SYCP1 lattice structures and promoting recruitment of SYCE2-TEX12 and SYCE1-SIX60S1 complexes. Required for chromosome loading of the central element-specific SCS proteins, and for initiating synapsis between homologous chromosomes. Chromosome loading appears to require SYCP1. Required for fertility and normal testis development. May play a role in apoptosis of spermatogenic cells and pathogenesis of cryptorchidism. In Mus musculus (Mouse), this protein is Synaptonemal complex central element protein 3.